The chain runs to 24 residues: U1-poneritoxin-Na1a (24 aa).

The protein belongs to the non-disulfide-bridged peptide (NDBP) superfamily. Medium-length antimicrobial peptide (group 3) family. Ponericin-W subfamily. Expressed by the venom gland.

It is found in the secreted. Its subcellular location is the target cell membrane. Functionally, has a broad spectrum of activity against both Gram-positive and Gram-negative bacteria and S.cerevisiae. Has insecticidal and hemolytic activities. May act by disrupting the integrity of the bacterial cell membrane. The sequence is that of U1-poneritoxin-Na1a from Neoponera apicalis (Ant).